We begin with the raw amino-acid sequence, 1409 residues long: DNA-directed RNA polymerase subunit beta' (1409 aa).

Cys70, Cys72, Cys85, and Cys88 together coordinate Zn(2+). Mg(2+) contacts are provided by Asp458, Asp460, and Asp462. 4 residues coordinate Zn(2+): Cys813, Cys887, Cys894, and Cys897. Positions 1385–1403 are enriched in low complexity; that stretch reads EAAELAGSTSDVSTTADAS. The segment at 1385–1409 is disordered; it reads EAAELAGSTSDVSTTADASEGAASE.

This sequence belongs to the RNA polymerase beta' chain family. In terms of assembly, the RNAP catalytic core consists of 2 alpha, 1 beta, 1 beta' and 1 omega subunit. When a sigma factor is associated with the core the holoenzyme is formed, which can initiate transcription. The cofactor is Mg(2+). Zn(2+) is required as a cofactor.

The catalysed reaction is RNA(n) + a ribonucleoside 5'-triphosphate = RNA(n+1) + diphosphate. Functionally, DNA-dependent RNA polymerase catalyzes the transcription of DNA into RNA using the four ribonucleoside triphosphates as substrates. This chain is DNA-directed RNA polymerase subunit beta', found in Variovorax paradoxus (strain S110).